The following is a 113-amino-acid chain: UPF0342 protein SPy_0811/M5005_Spy0626 (113 aa).

It belongs to the UPF0342 family.

The polypeptide is UPF0342 protein SPy_0811/M5005_Spy0626 (Streptococcus pyogenes serotype M1).